The chain runs to 294 residues: Probable HTH-type transcriptional regulator LrrA (294 aa).

The region spanning 1-58 (MNITQLQILAAVVETGNFSAAALQLDLSQSAVSRAIAALEDELGVVLLSRGRFGARPT) is the HTH lysR-type domain. A DNA-binding region (H-T-H motif) is located at residues 18–37 (FSAAALQLDLSQSAVSRAIA).

The protein belongs to the LysR transcriptional regulatory family.

The protein is Probable HTH-type transcriptional regulator LrrA (lrrA) of Synechococcus elongatus (strain ATCC 33912 / PCC 7942 / FACHB-805) (Anacystis nidulans R2).